Here is a 368-residue protein sequence, read N- to C-terminus: Peptide chain release factor 2 (368 aa).

An N5-methylglutamine modification is found at Q249.

This sequence belongs to the prokaryotic/mitochondrial release factor family. Post-translationally, methylated by PrmC. Methylation increases the termination efficiency of RF2.

It localises to the cytoplasm. In terms of biological role, peptide chain release factor 2 directs the termination of translation in response to the peptide chain termination codons UGA and UAA. The sequence is that of Peptide chain release factor 2 from Rhodococcus erythropolis (strain PR4 / NBRC 100887).